A 522-amino-acid chain; its full sequence is Sugar transport protein 1 (522 aa).

Over 1–22 (MPAGGFVVGDGQKAYPGKLTPF) the chain is Cytoplasmic. A helical membrane pass occupies residues 23–43 (VLFTCVVAAMGGLIFGYDIGI). Residues 44–79 (SGGVTSMPSFLKRFFPSVYRKQQEDASTNQYCQYDS) lie on the Extracellular side of the membrane. Residues 80 to 100 (PTLTMFTSSLYLAALISSLVA) form a helical membrane-spanning segment. Topologically, residues 101-117 (STVTRKFGRRLSMLFGG) are cytoplasmic. The chain crosses the membrane as a helical span at residues 118–138 (ILFCAGALINGFAKHVWMLIV). Residues 139-140 (GR) lie on the Extracellular side of the membrane. A helical membrane pass occupies residues 141–161 (ILLGFGIGFANQAVPLYLSEM). At 162 to 171 (APYKYRGALN) the chain is on the cytoplasmic side. The helical transmembrane segment at 172-192 (IGFQLSITIGILVAEVLNYFF) threads the bilayer. The Extracellular segment spans residues 193 to 202 (AKIKGGWGWR). A helical membrane pass occupies residues 203–223 (LSLGGAVVPALIITIGSLVLP). Residues 224–289 (DTPNSMIERG…YRPHLTMAVM (66 aa)) are Cytoplasmic-facing. A Phosphoserine modification is found at Ser252. Residues 290 to 310 (IPFFQQLTGINVIMFYAPVLF) traverse the membrane as a helical segment. The Extracellular portion of the chain corresponds to 311–321 (NTIGFTTDASL). A helical transmembrane segment spans residues 322–342 (MSAVVTGSVNVAATLVSIYGV). Over 343–348 (DRWGRR) the chain is Cytoplasmic. The helical transmembrane segment at 349-369 (FLFLEGGTQMLICQAVVAACI) threads the bilayer. Topologically, residues 370 to 384 (GAKFGVDGTPGELPK) are extracellular. A helical membrane pass occupies residues 385 to 405 (WYAIVVVTFICIYVAGFAWSW). Over 406–427 (GPLGWLVPSEIFPLEIRSAAQS) the chain is Cytoplasmic. Residues 428–448 (ITVSVNMIFTFIIAQIFLTML) form a helical membrane-spanning segment. The Extracellular segment spans residues 449–452 (CHLK). A helical transmembrane segment spans residues 453-473 (FGLFLVFAFFVVVMSIFVYIF). The Cytoplasmic segment spans residues 474 to 522 (LPETKGIPIEEMGQVWRSHWYWSRFVEDGEYGNALEMGKNSNQAGTKHV).

Belongs to the major facilitator superfamily. Sugar transporter (TC 2.A.1.1) family. In terms of tissue distribution, mostly expressed in young leaves, especially in guard cells (at protein level). Also present in roots.

It is found in the cell membrane. Its function is as follows. Major hexose transporter. Mediates an active uptake of hexoses, by sugar/hydrogen symport. Can transport glucose, 3-O-methylglucose, fructose, xylose, mannose, galactose, fucose, 2-deoxyglucose and arabinose. Confers sensitivity to galactose in seedlings. The polypeptide is Sugar transport protein 1 (STP1) (Arabidopsis thaliana (Mouse-ear cress)).